Consider the following 977-residue polypeptide: Poly(ADP-ribose) glycohydrolase (977 aa).

The interval 1 to 69 (MSAGPGCEPC…LGRAGQHRGS (69 aa)) is disordered. The segment at 1-457 (MSAGPGCEPC…LSPDKKWLGT (457 aa)) is A-domain. A Nuclear localization signal motif is present at residues 10–16 (CTKRPRW). Residues 17–29 (DAAATSPPAASDA) show a composition bias toward low complexity. S69 carries the phosphoserine modification. A PIP-box (PCNA interacting peptide) motif is present at residues 77-84 (QKTITSWM). 2 positions are modified to phosphoserine: S138 and S198. The disordered stretch occupies residues 184-407 (SNANVDQSSP…CRNSKQHGRK (224 aa)). 2 stretches are compositionally biased toward basic and acidic residues: residues 192–207 (SPKD…ESRD) and 223–234 (TMEDEQGREARS). T200 carries the post-translational modification Phosphothreonine. Phosphoserine is present on residues S262, S265, S287, S292, S299, S303, and S317. Polar residues predominate over residues 280–291 (NRLNRQESSLGN). The segment covering 317–332 (SEADEETSPGFDEQED) has biased composition (acidic residues). The segment covering 333–343 (SSSAQTANKPS) has biased composition (polar residues). K341 carries the post-translational modification N6-acetyllysine. A compositionally biased stretch (basic and acidic residues) spans 346-356 (QPREADTELRK). S449 carries the post-translational modification Phosphoserine. Residues 611-796 (QPIPLLKQKM…TEQYSEYTGY (186 aa)) form a catalytic region. Substrate is bound at residue 727-728 (IE). Residue D738 is part of the active site. N741 and Q755 together coordinate substrate. Active-site residues include E756 and E757. Substrate contacts are provided by residues Y796 and 870–875 (NWGCGA).

It belongs to the poly(ADP-ribose) glycohydrolase family. In terms of assembly, interacts with PCNA. Interacts with NUDT5.

The protein localises to the nucleus. It catalyses the reaction [(1''-&gt;2')-ADP-alpha-D-ribose](n) + H2O = [(1''-&gt;2')-ADP-alpha-D-ribose](n-1) + ADP-D-ribose. Functionally, poly(ADP-ribose) glycohydrolase that degrades poly(ADP-ribose) by hydrolyzing the ribose-ribose bonds present in poly(ADP-ribose). PARG acts both as an endo- and exoglycosidase, releasing poly(ADP-ribose) of different length as well as ADP-ribose monomers. It is however unable to cleave the ester bond between the terminal ADP-ribose and ADP-ribosylated residues, leaving proteins that are mono-ADP-ribosylated. Poly(ADP-ribose) is synthesized after DNA damage is only present transiently and is rapidly degraded by PARG. Required to prevent detrimental accumulation of poly(ADP-ribose) upon prolonged replicative stress, while it is not required for recovery from transient replicative stress. Responsible for the prevalence of mono-ADP-ribosylated proteins in cells, thanks to its ability to degrade poly(ADP-ribose) without cleaving the terminal protein-ribose bond. Required for retinoid acid-dependent gene transactivation, probably by removing poly(ADP-ribose) from histone demethylase KDM4D, allowing chromatin derepression at RAR-dependent gene promoters. Involved in the synthesis of ATP in the nucleus, together with PARP1, NMNAT1 and NUDT5. Nuclear ATP generation is required for extensive chromatin remodeling events that are energy-consuming. The chain is Poly(ADP-ribose) glycohydrolase from Bos taurus (Bovine).